Consider the following 398-residue polypeptide: Putative isocitrate lyase subunit B (398 aa).

It belongs to the isocitrate lyase/PEP mutase superfamily. Isocitrate lyase family. Mg(2+) serves as cofactor.

The catalysed reaction is D-threo-isocitrate = glyoxylate + succinate. Together with AceAa, they could catalyze the formation of succinate and glyoxylate from isocitrate. The polypeptide is Putative isocitrate lyase subunit B (aceAb) (Mycobacterium tuberculosis (strain ATCC 25618 / H37Rv)).